Here is a 575-residue protein sequence, read N- to C-terminus: Alpha-(1,6)-fucosyltransferase (575 aa).

At 1 to 9 the chain is on the cytoplasmic side; the sequence is MRPWTGSWR. Residues 10–30 traverse the membrane as a helical; Signal-anchor for type II membrane protein segment; it reads WIMLILFAWGTLLFYIGGHLV. Residues 31–575 lie on the Lumenal side of the membrane; the sequence is RDNDHSDHSS…KYPTYPEADK (545 aa). 3 disulfides stabilise this stretch: C204/C266, C212/C230, and C218/C222. Positions 206–493 constitute a GT23 domain; the sequence is KAKKLVCNIN…PDASANFRSL (288 aa). Position 278 is a phosphoserine (S278). Residues 299–305 carry the SH3-binding motif; that stretch reads PRPPYLP. The important for donor substrate binding stretch occupies residues 365–366; sequence RR. The cysteines at positions 465 and 472 are disulfide-linked. The SH3 domain maps to 502–563; that stretch reads PNAHNQIAIY…PSYKVREKIE (62 aa).

Belongs to the glycosyltransferase 23 family. Tyrosine phosphorylated by PKDCC/VLK. Highest expression in brain.

It is found in the golgi apparatus. It localises to the golgi stack membrane. The catalysed reaction is N(4)-{beta-D-GlcNAc-(1-&gt;2)-alpha-D-Man-(1-&gt;3)-[beta-D-GlcNAc-(1-&gt;2)-alpha-D-Man-(1-&gt;6)]-beta-D-Man-(1-&gt;4)-beta-D-GlcNAc-(1-&gt;4)-beta-D-GlcNAc}-L-asparaginyl-[protein] + GDP-beta-L-fucose = an N(4)-{beta-D-GlcNAc-(1-&gt;2)-alpha-D-Man-(1-&gt;3)-[beta-D-GlcNAc-(1-&gt;2)-alpha-D-Man-(1-&gt;6)]-beta-D-Man-(1-&gt;4)-beta-D-GlcNAc-(1-&gt;4)-[alpha-L-Fuc-(1-&gt;6)]-beta-D-GlcNAc}-L-asparaginyl-[protein] + GDP + H(+). The protein operates within protein modification; protein glycosylation. Functionally, catalyzes the addition of fucose in alpha 1-6 linkage to the first GlcNAc residue, next to the peptide chains in N-glycans. The sequence is that of Alpha-(1,6)-fucosyltransferase (FUT8) from Sus scrofa (Pig).